Here is a 21-residue protein sequence, read N- to C-terminus: Peptide PGLa-R3 (21 aa).

Leucine 21 is subject to Leucine amide.

Expressed by the skin glands.

It localises to the secreted. Functionally, antimicrobial peptide. This chain is Peptide PGLa-R3, found in Xenopus ruwenzoriensis (Uganda clawed frog).